Consider the following 862-residue polypeptide: MNPFSSGTRLSDMIRAIRASKTAAEERAVVRKECAAIRASINENDQDYRHRDLAKLMFIHMLGYPTHFGQMECLKLIASPGFPEKRIGYLGLMLLLDERQEVLMLVTNSLKQDLNHTNQYIVGLALCALGNICSAEMARDLAPEVERLLQFRDPNIRKKAALCAIRIIRKVPDLSENFINPGAALLKEKHHGVLITGVHLCTEICKVSSEALEYFRKKCTEGLVKTLRDIANSPYSPEYDVAGITDPFLHIRLLKLLRVLGQGDADASDCMNDILAQVASKTESNKNAGNAILYECVQTIMSIEENGGLRVLAINILGKFLSNRDNNIRYVALNMLMRSLTVDSQAVQRHRATILECVKDSDASIQKRALELIYLLVNENNVKPLAKELIEYLEVSEQDFKGDLTAKICSIVEKFAPEKIWYIDQMLKVLSEAGTYVKEDVWHALIVVITNAPDLHGYTVRALYRALHTSFEQETLVRVAIWCIGEYADLLVNNAGMLDLEDPITVTESDAVDVVENAIKHHLSDVTTKAMALIALLKISSRFPSCSERVKSIIGQNKGSFVLELQQRSLEFSSVIQKHQNIRSSLVERMPVLDEATFSGRRAGSLPASVSTSGKSPLGIPNGVAKAAAPLVDLLDLGSDDTPAPTSSSNNFLQDLLGVDLSQPSAQPGAMQPSQAGADILMDLLSIGTPAPVQNGSANGDLLSIQDNNAPIAPSLTSPTAPSSMMDLLDGFGPTPPKSEDKSAAYPSIVAFESSSLKIEFNFTKQSENPQTTDIVANFINLTPNVYTEFLFQAAVPKFLQLHLDPASSNSLPANGNIKQTMRVTNSQKGKKPIVMRMRVGYKINGKDVLEEGQINNFPRGL.

11 HEAT repeats span residues 1–28, 29–65, 101–136, 137–173, 308–345, 346–382, 384–417, 418–454, 458–496, 507–545, and 560–599; these read MNPF…EERA, VVRK…LGYP, EVLM…CSAE, MARD…KVPD, GLRV…VDSQ, AVQR…ENNV, PLAK…KFAP, EKIW…NAPD, YTVR…NNAG, TESD…RFPS, and SFVL…ATFS. In terms of domain architecture, GAE spans 744–859; the sequence is AAYPSIVAFE…LEEGQINNFP (116 aa).

This sequence belongs to the adaptor complexes large subunit family. Adaptor protein complex 1 (AP-1) is a heterotetramer composed of two large adaptins (gamma-type subunit and beta-type subunit), a medium adaptin (mu-type subunit) and a small adaptin (sigma-type subunit).

It localises to the golgi apparatus. Its subcellular location is the cytoplasmic vesicle. The protein localises to the clathrin-coated vesicle membrane. Functionally, subunit of clathrin-associated adaptor protein complex 1 that plays a role in protein sorting at the trans-Golgi network and early endosomes (TGN/EE). The AP complexes mediate both the recruitment of clathrin to membranes and the recognition of sorting signals within the cytosolic tails of transmembrane cargo molecules. The chain is AP-1 complex subunit gamma-2 from Arabidopsis thaliana (Mouse-ear cress).